The primary structure comprises 594 residues: Golgi-associated RAB2 interactor protein 4 (594 aa).

The segment at 387 to 524 (MDAAAGPPVS…TSSGSSKGLG (138 aa)) is disordered. A compositionally biased stretch (polar residues) spans 396–406 (STRQSKSSLSG). Composition is skewed to basic and acidic residues over residues 408-433 (HGRE…DRAL), 442-455 (TGES…DKIA), and 468-477 (ANRDDKKEKG). Polar residues predominate over residues 511-520 (SLWTTSSGSS).

Belongs to the GARIN family. Interacts (via N-terminus) with RAB2B (in GTP-bound form).

Its subcellular location is the golgi apparatus. Its function is as follows. RAB2B effector protein required for the compacted Golgi morphology, probably through interaction with small GTPase RAB2B. This is Golgi-associated RAB2 interactor protein 4 from Homo sapiens (Human).